We begin with the raw amino-acid sequence, 517 residues long: Crotonobetaine/carnitine--CoA ligase (517 aa).

The protein belongs to the ATP-dependent AMP-binding enzyme family.

It carries out the reaction 4-(trimethylamino)butanoate + ATP + CoA = 4-(trimethylamino)butanoyl-CoA + AMP + diphosphate. It catalyses the reaction crotonobetaine + ATP + CoA = crotonobetainyl-CoA + AMP + diphosphate. The catalysed reaction is (R)-carnitine + ATP + CoA = (R)-carnitinyl-CoA + AMP + diphosphate. The protein operates within amine and polyamine metabolism; carnitine metabolism. In terms of biological role, catalyzes the transfer of CoA to carnitine, generating the initial carnitinyl-CoA needed for the CaiB reaction cycle. Also has activity toward crotonobetaine and gamma-butyrobetaine. The sequence is that of Crotonobetaine/carnitine--CoA ligase from Salmonella choleraesuis (strain SC-B67).